Reading from the N-terminus, the 119-residue chain is Large ribosomal subunit protein uL22 (119 aa).

It belongs to the universal ribosomal protein uL22 family. Part of the 50S ribosomal subunit.

Functionally, this protein binds specifically to 23S rRNA; its binding is stimulated by other ribosomal proteins, e.g. L4, L17, and L20. It is important during the early stages of 50S assembly. It makes multiple contacts with different domains of the 23S rRNA in the assembled 50S subunit and ribosome. In terms of biological role, the globular domain of the protein is located near the polypeptide exit tunnel on the outside of the subunit, while an extended beta-hairpin is found that lines the wall of the exit tunnel in the center of the 70S ribosome. This Rickettsia canadensis (strain McKiel) protein is Large ribosomal subunit protein uL22.